Here is a 193-residue protein sequence, read N- to C-terminus: Signal peptidase I T (193 aa).

At 1 to 25 (MTEEKNTNTEKTAKKKTNTYLEWGK) the chain is on the cytoplasmic side. A helical transmembrane segment spans residues 26-42 (AIVIAVLLALLIRHFLF). The Extracellular portion of the chain corresponds to 43 to 193 (EPYLVEGSSM…FPFNEMRQTK (151 aa)). Residues serine 51 and lysine 93 contribute to the active site.

It belongs to the peptidase S26 family.

It is found in the cell membrane. It catalyses the reaction Cleavage of hydrophobic, N-terminal signal or leader sequences from secreted and periplasmic proteins.. The polypeptide is Signal peptidase I T (sipT) (Bacillus subtilis (strain 168)).